A 232-amino-acid chain; its full sequence is uncharacterized protein (232 aa).

The first 32 residues, 1 to 32 (MTTSKIATAFKTATFALAAGAVALGLASPADA), serve as a signal peptide directing secretion.

This is an uncharacterized protein from Mycobacterium bovis (strain ATCC BAA-935 / AF2122/97).